The chain runs to 184 residues: MRKIKDIEKGLLTDCRQIQSPHFDKRPNPQDISLLVIHYISLPPEQFGGGYVDDFFQGKLDPKIHPYFAEIYQMRVSAHCLIERNGRITQYVNFNDRAWHAGVSNFQGREKCNDFAIGIELEGSNEQPFTDAQYFSLQELTNVIMKSYPKITKDRIVGHCDISPKRKIDPGQYFDWERYLSSVK.

The 142-residue stretch at 30–171 (QDISLLVIHY…ISPKRKIDPG (142 aa)) folds into the N-acetylmuramoyl-L-alanine amidase domain. H38 serves as a coordination point for Zn(2+). The Proton acceptor role is filled by E120. H159 and D169 together coordinate Zn(2+).

This sequence belongs to the N-acetylmuramoyl-L-alanine amidase 2 family. The cofactor is Zn(2+).

The protein resides in the cytoplasm. The catalysed reaction is Hydrolyzes the link between N-acetylmuramoyl residues and L-amino acid residues in certain cell-wall glycopeptides.. Functionally, involved in cell wall peptidoglycan recycling. Specifically cleaves the amide bond between the lactyl group of N-acetylmuramic acid and the alpha-amino group of the L-alanine in degradation products containing an anhydro N-acetylmuramyl moiety. The polypeptide is 1,6-anhydro-N-acetylmuramyl-L-alanine amidase AmpD (ampD) (Haemophilus influenzae (strain ATCC 51907 / DSM 11121 / KW20 / Rd)).